The following is a 259-amino-acid chain: Malonyl-[acyl-carrier protein] O-methyltransferase 2 (259 aa).

Belongs to the methyltransferase superfamily.

The enzyme catalyses malonyl-[ACP] + S-adenosyl-L-methionine = malonyl-[ACP] methyl ester + S-adenosyl-L-homocysteine. It participates in cofactor biosynthesis; biotin biosynthesis. Functionally, converts the free carboxyl group of a malonyl-thioester to its methyl ester by transfer of a methyl group from S-adenosyl-L-methionine (SAM). It allows to synthesize pimeloyl-ACP via the fatty acid synthetic pathway. This Ilyobacter polytropus (strain ATCC 51220 / DSM 2926 / LMG 16218 / CuHBu1) protein is Malonyl-[acyl-carrier protein] O-methyltransferase 2.